Reading from the N-terminus, the 218-residue chain is Adapter protein MecA (218 aa).

This sequence belongs to the MecA family. Homodimer.

Its function is as follows. Enables the recognition and targeting of unfolded and aggregated proteins to the ClpC protease or to other proteins involved in proteolysis. This chain is Adapter protein MecA, found in Exiguobacterium sp. (strain ATCC BAA-1283 / AT1b).